The following is a 432-amino-acid chain: 3-phosphoshikimate 1-carboxyvinyltransferase (432 aa).

3-phosphoshikimate contacts are provided by lysine 21, serine 22, and arginine 26. Residue lysine 21 coordinates phosphoenolpyruvate. Positions 94 and 122 each coordinate phosphoenolpyruvate. The 3-phosphoshikimate site is built by serine 168, glutamine 170, aspartate 317, and lysine 344. Phosphoenolpyruvate is bound at residue glutamine 170. Aspartate 317 functions as the Proton acceptor in the catalytic mechanism. Phosphoenolpyruvate-binding residues include arginine 348 and arginine 391.

The protein belongs to the EPSP synthase family. Monomer.

The protein resides in the cytoplasm. It catalyses the reaction 3-phosphoshikimate + phosphoenolpyruvate = 5-O-(1-carboxyvinyl)-3-phosphoshikimate + phosphate. The protein operates within metabolic intermediate biosynthesis; chorismate biosynthesis; chorismate from D-erythrose 4-phosphate and phosphoenolpyruvate: step 6/7. Catalyzes the transfer of the enolpyruvyl moiety of phosphoenolpyruvate (PEP) to the 5-hydroxyl of shikimate-3-phosphate (S3P) to produce enolpyruvyl shikimate-3-phosphate and inorganic phosphate. In Petrotoga mobilis (strain DSM 10674 / SJ95), this protein is 3-phosphoshikimate 1-carboxyvinyltransferase.